Reading from the N-terminus, the 423-residue chain is Imidazolonepropionase (423 aa).

2 residues coordinate Fe(3+): histidine 91 and histidine 93. 2 residues coordinate Zn(2+): histidine 91 and histidine 93. The 4-imidazolone-5-propanoate site is built by arginine 100, tyrosine 163, and histidine 193. Tyrosine 163 is an N-formimidoyl-L-glutamate binding site. A Fe(3+)-binding site is contributed by histidine 257. Residue histidine 257 participates in Zn(2+) binding. Glutamine 260 contributes to the 4-imidazolone-5-propanoate binding site. Position 331 (aspartate 331) interacts with Fe(3+). A Zn(2+)-binding site is contributed by aspartate 331. Residues asparagine 333 and glycine 335 each coordinate N-formimidoyl-L-glutamate. Threonine 336 contacts 4-imidazolone-5-propanoate.

This sequence belongs to the metallo-dependent hydrolases superfamily. HutI family. Zn(2+) serves as cofactor. Requires Fe(3+) as cofactor.

The protein localises to the cytoplasm. The enzyme catalyses 4-imidazolone-5-propanoate + H2O = N-formimidoyl-L-glutamate. It participates in amino-acid degradation; L-histidine degradation into L-glutamate; N-formimidoyl-L-glutamate from L-histidine: step 3/3. Functionally, catalyzes the hydrolytic cleavage of the carbon-nitrogen bond in imidazolone-5-propanoate to yield N-formimidoyl-L-glutamate. It is the third step in the universal histidine degradation pathway. This chain is Imidazolonepropionase, found in Bdellovibrio bacteriovorus (strain ATCC 15356 / DSM 50701 / NCIMB 9529 / HD100).